We begin with the raw amino-acid sequence, 326 residues long: Protein C10 (326 aa).

This sequence belongs to the poxviridae C4/C10 protein family.

This Homo sapiens (Human) protein is Protein C10.